We begin with the raw amino-acid sequence, 482 residues long: Protein translocase subunit SecY (482 aa).

The interval 1–22 (MVIKKPANKVDKKSTFKSSNKK) is disordered. Helical transmembrane passes span 41-61 (ILFT…TVPG), 92-112 (FSIL…VQLL), 137-157 (LTKI…IFTL), 177-197 (AFYY…MLWI), 201-221 (ITIK…IIIS), 243-263 (IFFS…LVIL), 303-323 (VIPV…SQII), 342-362 (FNTW…TFLY), 405-425 (VVGS…SKLT), and 426-446 (QLPS…SVAI).

The protein belongs to the SecY/SEC61-alpha family. In terms of assembly, component of the Sec protein translocase complex. Heterotrimer consisting of SecY, SecE and SecG subunits. The heterotrimers can form oligomers, although 1 heterotrimer is thought to be able to translocate proteins. Interacts with the ribosome. Interacts with SecDF, and other proteins may be involved. Interacts with SecA.

The protein localises to the cell membrane. Its function is as follows. The central subunit of the protein translocation channel SecYEG. Consists of two halves formed by TMs 1-5 and 6-10. These two domains form a lateral gate at the front which open onto the bilayer between TMs 2 and 7, and are clamped together by SecE at the back. The channel is closed by both a pore ring composed of hydrophobic SecY resides and a short helix (helix 2A) on the extracellular side of the membrane which forms a plug. The plug probably moves laterally to allow the channel to open. The ring and the pore may move independently. This chain is Protein translocase subunit SecY, found in Mycoplasma capricolum subsp. capricolum (strain California kid / ATCC 27343 / NCTC 10154).